Here is a 141-residue protein sequence, read N- to C-terminus: Large ribosomal subunit protein uL22 (141 aa).

Residues 108–141 (KSEEKKTVAKKTTTTKAPAKKTTSTKKATVKKES) form a disordered region. A compositionally biased stretch (low complexity) spans 117 to 134 (KKTTTTKAPAKKTTSTKK).

The protein belongs to the universal ribosomal protein uL22 family. Part of the 50S ribosomal subunit.

Its function is as follows. This protein binds specifically to 23S rRNA; its binding is stimulated by other ribosomal proteins, e.g. L4, L17, and L20. It is important during the early stages of 50S assembly. It makes multiple contacts with different domains of the 23S rRNA in the assembled 50S subunit and ribosome. Functionally, the globular domain of the protein is located near the polypeptide exit tunnel on the outside of the subunit, while an extended beta-hairpin is found that lines the wall of the exit tunnel in the center of the 70S ribosome. The polypeptide is Large ribosomal subunit protein uL22 (Campylobacter jejuni subsp. jejuni serotype O:2 (strain ATCC 700819 / NCTC 11168)).